A 508-amino-acid chain; its full sequence is Pyruvate kinase (508 aa).

Arg-56 lines the substrate pocket. K(+) is bound by residues Asn-58, Ser-60, Asp-90, and Thr-91. 58–61 (NFSH) lines the ATP pocket. Positions 97 and 185 each coordinate ATP. Glu-251 lines the Mg(2+) pocket. 3 residues coordinate substrate: Gly-274, Asp-275, and Thr-307. Asp-275 contacts Mg(2+).

This sequence belongs to the pyruvate kinase family. As to quaternary structure, homotetramer. Requires Mg(2+) as cofactor. K(+) serves as cofactor.

The catalysed reaction is pyruvate + ATP = phosphoenolpyruvate + ADP + H(+). It participates in carbohydrate degradation; glycolysis; pyruvate from D-glyceraldehyde 3-phosphate: step 5/5. Its activity is regulated as follows. Regulated by phosphoenolpyruvate substrate and is allosterically activated by ribose-5-phosphate, AMP and other nucleoside monophosphates but not by fructose-1,6-bisphosphate. This is Pyruvate kinase (pyk) from Mycoplasma genitalium (strain ATCC 33530 / DSM 19775 / NCTC 10195 / G37) (Mycoplasmoides genitalium).